A 212-amino-acid polypeptide reads, in one-letter code: 2-hydroxychromene-2-carboxylate isomerase (212 aa).

Ser-24 (nucleophile) is an active-site residue. A glutathione-binding site is contributed by Ser-24. Substrate-binding positions include Lys-56, Asn-66–Arg-67, and Tyr-97. Glutathione contacts are provided by residues Val-181 and Trp-192 to Asp-195.

This sequence belongs to the GST superfamily. NadH family. The cofactor is glutathione.

It carries out the reaction 2-hydroxychromene-2-carboxylate = (3E)-4-(2-hydroxyphenyl)-2-oxobut-3-enoate. It participates in aromatic compound metabolism; naphthalene degradation. Involved in the naphthalene catabolic pathway. Catalyzes the reversible glutathione-dependent isomerization of 2-hydroxychromene-2-carboxylate (HCCA) to trans-O-hydroxybenzylidenepyruvate (THBPA). In Pseudomonas sp. (strain C18), this protein is 2-hydroxychromene-2-carboxylate isomerase (doxJ).